A 550-amino-acid chain; its full sequence is MPLQGSVSFKDVTVDFTQEEWQQLDPAQKALYRDVMLENYCHFVSVGFHMAKPDMIRKLEQGEELWTQRIFPSYSYLEEDGKTEDVLVKFKEYQDRHSRPLIFINHKKLIKERSNIYGKTFTLGKNRISKTILCEYKPDGKVLKNISELVIRNISPIKEKFGDSTGWEKSLLNTKHEKIHPAVNLHKQTERVLSGKQELIQHQKVQAPEQPFDHNECEKSFLMKGMLFTHTRAHRGERTFEYNKDGIAFIEKSSLSVHPSNLMEKKPSAYNKYGKFLCRKPVFIMPQRPQTEEKPFHCPYCGNNFRRKSYLIEHQRIHTGEKPYVCNQCGKAFRQKTALTLHEKTHIEGKPFICIDCGKSFRQKATLTRHHKTHTGEKAYECPQCGSAFRKKSYLIDHQRTHTGEKPYQCNECGKAFIQKTTLTVHQRTHTGEKPYICNECGKSFCQKTTLTLHQRIHTGEKPYICNECGKSFRQKAILTVHHRIHTGEKSNGCPQCGKAFSRKSNLIRHQKTHTGEKPYECKQCGKFFSCKSNLIVHQKTHKVETTGIQ.

Residues 1-105 (MPLQGSVSFK…RHSRPLIFIN (105 aa)) form a mediates interaction with TRIM28 region. 2 represses transcription regions span residues 5–46 (GSVS…FVSV) and 70–211 (IFPS…PEQP). Residues 7–78 (VSFKDVTVDF…RIFPSYSYLE (72 aa)) form the KRAB domain. The C2H2-type 1; degenerate zinc-finger motif lies at 212–234 (FDHNECEKSFLMKGMLFTHTRAH). C2H2-type zinc fingers lie at residues 296–318 (FHCP…QRIH), 324–346 (YVCN…EKTH), 352–374 (FICI…HKTH), 380–402 (YECP…QRTH), 408–430 (YQCN…QRTH), 436–458 (YICN…QRIH), 464–486 (YICN…HRIH), 492–514 (NGCP…QKTH), and 520–542 (YECK…QKTH). Residues 296 to 550 (FHCPYCGNNF…THKVETTGIQ (255 aa)) form a required for transcriptional repression activity; probably mediates sequence-specific DNA-binding region.

This sequence belongs to the krueppel C2H2-type zinc-finger protein family. As to quaternary structure, interacts with TRIM28; enhances the transcriptional repressor activity. Specifically expressed in heart with a weaker expression also detected in skeletal muscle.

The protein localises to the nucleus. Its function is as follows. Functions as a sequence-specific transcriptional repressor. The chain is Zinc finger protein 382 (ZNF382) from Homo sapiens (Human).